Here is a 427-residue protein sequence, read N- to C-terminus: Trigger factor (427 aa).

Residues 163-248 (GDTAVIDFEG…VHEIKAKELP (86 aa)) enclose the PPIase FKBP-type domain.

Belongs to the FKBP-type PPIase family. Tig subfamily.

The protein resides in the cytoplasm. The enzyme catalyses [protein]-peptidylproline (omega=180) = [protein]-peptidylproline (omega=0). In terms of biological role, involved in protein export. Acts as a chaperone by maintaining the newly synthesized protein in an open conformation. Functions as a peptidyl-prolyl cis-trans isomerase. The chain is Trigger factor from Bacillus cytotoxicus (strain DSM 22905 / CIP 110041 / 391-98 / NVH 391-98).